A 371-amino-acid chain; its full sequence is uncharacterized protein (371 aa).

Residues 20–250 form the ABC transporter domain; it reads VTIRNVTKRY…PANIFVAGFI (231 aa). Position 52 to 59 (52 to 59) interacts with ATP; that stretch reads GPSGCGKS.

It belongs to the ABC transporter superfamily.

Its subcellular location is the cell inner membrane. Its function is as follows. Probably part of a binding-protein-dependent transport system y4oPQRS. This system probably transports a sugar-like molecule. Probably responsible for energy coupling to the transport system. This is an uncharacterized protein from Sinorhizobium fredii (strain NBRC 101917 / NGR234).